Reading from the N-terminus, the 327-residue chain is G protein pathway suppressor 2 (327 aa).

Residues 14 to 109 adopt a coiled-coil conformation; it reads MARALHRHIM…RRRKEQSDLT (96 aa). The disordered stretch occupies residues 26-65; that stretch reads RERKRQEEEEVDKMMEQKMKEEQERRKKKEMEERMSLEET. Glycyl lysine isopeptide (Lys-Gly) (interchain with G-Cter in SUMO1) cross-links involve residues Lys-45 and Lys-71. The interaction with SUMO stretch occupies residues 61 to 94; the sequence is SLEETKEQILKLQEKLSALQEEKHQLFLQLKKVL. 3 disordered regions span residues 178–208, 253–285, and 300–327; these read GQFQGSPGGAYGTAQPPPHYGPTQPAYSPSQ, QKQMEHANQQTSFSDSSSLRPMHPQALHPAPGL, and KSGFATTSQPGPRLPFIQHSQNPRFYHK. Residues 253-271 show a composition bias toward polar residues; sequence QKQMEHANQQTSFSDSSSL. Position 312 is an asymmetric dimethylarginine (Arg-312). The span at 317–327 shows a compositional bias: polar residues; that stretch reads QHSQNPRFYHK. Arg-323 is modified (asymmetric dimethylarginine; alternate). An Omega-N-methylarginine; alternate modification is found at Arg-323.

Component of the N-Cor repressor complex, at least composed of NCOR1, NCOR2, HDAC3, TBL1X, TBL1R, CORO2A and GPS2. Interacts (when sumoylated at Lys-71) with TBL1X; leading to protect GPS2 from degradation by the proteasome. Interacts with UBE2N; leading to inhibit UBE2N/Ubc13 activity. Interacts with TRAF1. Interacts with TRAF2. Interacts with TRAF6. Interacts with PPARG (when in the liganded conformation). Interacts with (sumoylated) NR1H2; interaction with sumoylated NR1H2 and NR5A2 onto hepatic acute phase protein promoters prevents N-Cor corepressor complex dissociation. Interacts with (sumoylated) NR5A2; interaction with sumoylated NR1H2 and NR5A2 onto hepatic acute phase protein promoters prevents N-Cor corepressor complex dissociation. Interacts with NR1H3. Interacts with RFX4. Interacts with ANKRD26. In terms of processing, sumoylation regulates its subcellular location. Sumoylation at Lys-45 and Lys-71 regulates the shuttling between the cytoplasm and the nucleus. Sumoylation at Lys-71 is required for interaction with TBL1X. Sumoylated at Lys-45 and Lys-71 in mitochondrion. Desumoylation by SENP1 leads to relocation from the mitochondria to the nucleus. Post-translationally, ubiquitinated at the C-terminus by SIAH2; leading to its degradation by the proteasome. Interaction with TBL1X and methylation at Arg-323 protect GPS2 against ubiquitination and degradation. Methylated at Arg-312 and Arg-323 by PRMT6. Methylation at Arg-323 protects from degradation by the proteasome.

It localises to the nucleus. Its subcellular location is the mitochondrion. The protein resides in the cytoplasm. It is found in the cytosol. In terms of biological role, key regulator of inflammation, lipid metabolism and mitochondrion homeostasis that acts by inhibiting the activity of the ubiquitin-conjugating enzyme UBE2N/Ubc13, thereby inhibiting 'Lys-63'-linked ubiquitination. In the nucleus, can both acts as a corepressor and coactivator of transcription, depending on the context. Acts as a transcription coactivator in adipocytes by promoting the recruitment of PPARG to promoters: acts by inhibiting the activity of the ubiquitin-conjugating enzyme UBE2N/Ubc13, leading to stabilization of KDM4A and subsequent histone H3 'Lys-9' (H3K9) demethylation. Promotes cholesterol efflux by acting as a transcription coactivator. Acts as a regulator of B-cell development by inhibiting UBE2N/Ubc13, thereby restricting the activation of Toll-like receptors (TLRs) and B-cell antigen receptors (BCRs) signaling pathways. Acts as a key mediator of mitochondrial stress response: in response to mitochondrial depolarization, relocates from the mitochondria to the nucleus following desumoylation and specifically promotes expression of nuclear-encoded mitochondrial genes. Promotes transcription of nuclear-encoded mitochondrial genes by inhibiting UBE2N/Ubc13. Can also act as a corepressor as part of the N-Cor repressor complex by repressing active PPARG. Plays an anti-inflammatory role in macrophages and is required for insulin sensitivity by acting as a corepressor. Plays an anti-inflammatory role during the hepatic acute phase response by interacting with sumoylated NR1H2 and NR5A2 proteins, thereby preventing N-Cor corepressor complex dissociation. In the cytosol, also plays a non-transcriptional role by regulating insulin signaling and pro-inflammatory pathways. In the cytoplasm, acts as a negative regulator of inflammation by inhibiting the pro-inflammatory TNF-alpha pathway; acts by repressing UBE2N/Ubc13 activity. In the cytoplasm of adipocytes, restricts the activation of insulin signaling via inhibition of UBE2N/Ubc13-mediated ubiquitination of AKT. Able to suppress G-protein- and mitogen-activated protein kinase-mediated signal transduction. This is G protein pathway suppressor 2 from Mus musculus (Mouse).